Consider the following 107-residue polypeptide: Nucleoid-associated protein BT_0257 (107 aa).

This sequence belongs to the YbaB/EbfC family. As to quaternary structure, homodimer.

The protein localises to the cytoplasm. Its subcellular location is the nucleoid. Its function is as follows. Binds to DNA and alters its conformation. May be involved in regulation of gene expression, nucleoid organization and DNA protection. This is Nucleoid-associated protein BT_0257 from Bartonella tribocorum (strain CIP 105476 / IBS 506).